A 352-amino-acid polypeptide reads, in one-letter code: B1 bradykinin receptor (352 aa).

Over 1 to 41 (MAAQTLLELQPSNQSQLSALNTTSCDNAREAWDLLYQVLPI) the chain is Extracellular. 2 N-linked (GlcNAc...) asparagine glycosylation sites follow: N13 and N21. A helical membrane pass occupies residues 42–62 (FILTICAFGLLGNLFVLSVFL). Over 63–72 (LLRRRLTVAE) the chain is Cytoplasmic. Residues 73 to 93 (IYLVNLAASDLVFVLGLPFWA) traverse the membrane as a helical segment. The Extracellular segment spans residues 94 to 110 (QNIWNQFNWPFGDLLCR). A disulfide bond links C109 and C188. A helical membrane pass occupies residues 111–131 (VVNGVIKANLFISIFLMVAIS). The Cytoplasmic segment spans residues 132–153 (QDRYCVLVHPMASRRRRRRRRA). The chain crosses the membrane as a helical span at residues 154–174 (RATCMVIWAVGALLSTPTFLL). Residues 175–206 (RSVSAVQDLNISACILLLPHQAWHVARIVELN) are Extracellular-facing. N-linked (GlcNAc...) asparagine glycosylation occurs at N184. A helical transmembrane segment spans residues 207-227 (VLGFLLPLAAIIFFNGHILAS). At 228 to 250 (LRGQGEVSQTRIGGPKDCKTTVL) the chain is on the cytoplasmic side. The chain crosses the membrane as a helical span at residues 251–271 (ILTLVAAFLVCWAPYHCFAFL). The Extracellular portion of the chain corresponds to 272 to 294 (EFLFQVRAVRGCFWEDFIDLGLQ). The helical transmembrane segment at 295–315 (LANFFAFTNSCLNPVIYVFVG) threads the bilayer. Topologically, residues 316-326 (RLFRTKVWELY) are cytoplasmic. The S-palmitoyl cysteine moiety is linked to residue C329.

Belongs to the G-protein coupled receptor 1 family. Bradykinin receptor subfamily. BDKRB1 sub-subfamily.

Its subcellular location is the cell membrane. This is a receptor for bradykinin. Could be a factor in chronic pain and inflammation. The chain is B1 bradykinin receptor (BDKRB1) from Tupaia minor (Pigmy tree shrew).